Reading from the N-terminus, the 270-residue chain is Formamidopyrimidine-DNA glycosylase (270 aa).

The active-site Schiff-base intermediate with DNA is the Pro2. Glu3 (proton donor) is an active-site residue. Lys58 (proton donor; for beta-elimination activity) is an active-site residue. Positions 91, 110, and 151 each coordinate DNA. Residues 236-270 form an FPG-type zinc finger; it reads FAYGRGGQPCKVCGTTLREIKLGQRASVYCPKCQR. Arg260 serves as the catalytic Proton donor; for delta-elimination activity.

Belongs to the FPG family. As to quaternary structure, monomer. Zn(2+) is required as a cofactor.

It catalyses the reaction Hydrolysis of DNA containing ring-opened 7-methylguanine residues, releasing 2,6-diamino-4-hydroxy-5-(N-methyl)formamidopyrimidine.. The catalysed reaction is 2'-deoxyribonucleotide-(2'-deoxyribose 5'-phosphate)-2'-deoxyribonucleotide-DNA = a 3'-end 2'-deoxyribonucleotide-(2,3-dehydro-2,3-deoxyribose 5'-phosphate)-DNA + a 5'-end 5'-phospho-2'-deoxyribonucleoside-DNA + H(+). In terms of biological role, involved in base excision repair of DNA damaged by oxidation or by mutagenic agents. Acts as a DNA glycosylase that recognizes and removes damaged bases. Has a preference for oxidized purines, such as 7,8-dihydro-8-oxoguanine (8-oxoG). Has AP (apurinic/apyrimidinic) lyase activity and introduces nicks in the DNA strand. Cleaves the DNA backbone by beta-delta elimination to generate a single-strand break at the site of the removed base with both 3'- and 5'-phosphates. The protein is Formamidopyrimidine-DNA glycosylase of Pseudomonas syringae pv. tomato (strain ATCC BAA-871 / DC3000).